The primary structure comprises 458 residues: tRNA modification GTPase MnmE (458 aa).

Residues Arg-26, Glu-88, and Arg-127 each contribute to the (6S)-5-formyl-5,6,7,8-tetrahydrofolate site. Residues 224–378 (GLSTAIIGRP…IEDRINQLFF (155 aa)) enclose the TrmE-type G domain. Asn-234 is a K(+) binding site. GTP is bound by residues 234–239 (NVGKSS), 253–259 (TDIAGTT), and 278–281 (DTAG). Position 238 (Ser-238) interacts with Mg(2+). Residues Thr-253, Ile-255, and Thr-258 each contribute to the K(+) site. Thr-259 contacts Mg(2+). (6S)-5-formyl-5,6,7,8-tetrahydrofolate is bound at residue Lys-458.

Belongs to the TRAFAC class TrmE-Era-EngA-EngB-Septin-like GTPase superfamily. TrmE GTPase family. In terms of assembly, homodimer. Heterotetramer of two MnmE and two MnmG subunits. K(+) serves as cofactor.

It is found in the cytoplasm. Its function is as follows. Exhibits a very high intrinsic GTPase hydrolysis rate. Involved in the addition of a carboxymethylaminomethyl (cmnm) group at the wobble position (U34) of certain tRNAs, forming tRNA-cmnm(5)s(2)U34. The polypeptide is tRNA modification GTPase MnmE (Streptococcus pyogenes serotype M4 (strain MGAS10750)).